The primary structure comprises 497 residues: Cytochrome P450 26A1 (497 aa).

Residue C442 coordinates heme.

This sequence belongs to the cytochrome P450 family. The cofactor is heme. Expressed in most fetal and adult tissues with highest levels in adult liver, heart, pituitary gland, adrenal gland, placenta and regions of the brain. Expressed at high levels in lung, pancreas, skin and uterus (at protein level). Lower expression level is detected in spleen, kidney, intestine and adipose tissue (at protein level).

The protein resides in the endoplasmic reticulum membrane. The protein localises to the microsome membrane. It carries out the reaction all-trans-retinoate + reduced [NADPH--hemoprotein reductase] + O2 = all-trans-(4S)-hydroxyretinoate + oxidized [NADPH--hemoprotein reductase] + H2O + H(+). It catalyses the reaction all-trans-(4S)-hydroxyretinoate + reduced [NADPH--hemoprotein reductase] + O2 = all-trans-(4S,16)-dihydroxyretinoate + oxidized [NADPH--hemoprotein reductase] + H2O + H(+). The catalysed reaction is all-trans-retinoate + reduced [NADPH--hemoprotein reductase] + O2 = all-trans-18-hydroxyretinoate + oxidized [NADPH--hemoprotein reductase] + H2O + H(+). Functionally, a cytochrome P450 monooxygenase involved in the metabolism of retinoates (RAs), the active metabolites of vitamin A, and critical signaling molecules in animals. RAs exist as at least four different isomers: all-trans-RA (atRA), 9-cis-RA, 13-cis-RA, and 9,13-dicis-RA, where atRA is considered to be the biologically active isomer, although 9-cis-RA and 13-cis-RA also have activity. Catalyzes the hydroxylation of atRA primarily at C-4 and C-18, thereby contributing to the regulation of atRA homeostasis and signaling. Hydroxylation of atRA limits its biological activity and initiates a degradative process leading to its eventual elimination. Involved in the convertion of atRA to all-trans-4-oxo-RA. Able to metabolize other RAs such as 9-cis, 13-cis and 9,13-di-cis RA. Can oxidize all-trans-13,14-dihydroretinoate (DRA) to metabolites which could include all-trans-4-oxo-DRA, all-trans-4-hydroxy-DRA, all-trans-5,8-epoxy-DRA, and all-trans-18-hydroxy-DRA. May play a role in the oxidative metabolism of xenobiotics such as tazarotenic acid. The protein is Cytochrome P450 26A1 of Homo sapiens (Human).